A 199-amino-acid polypeptide reads, in one-letter code: Peroxynitrite isomerase (199 aa).

The short motif at 20–26 (GVWEGSG) is the GXWXGXG element. Heme b-binding residues include K158 and H190.

The protein belongs to the nitrobindin family. In terms of assembly, homodimer. The cofactor is heme b.

It catalyses the reaction peroxynitrite = nitrate. It participates in nitrogen metabolism. Its function is as follows. Heme-binding protein able to scavenge peroxynitrite and to protect free L-tyrosine against peroxynitrite-mediated nitration, by acting as a peroxynitrite isomerase that converts peroxynitrite to nitrate. Therefore, this protein likely plays a role in peroxynitrite sensing and in the detoxification of reactive nitrogen and oxygen species (RNS and ROS, respectively). Is able to bind nitric oxide (NO) in vitro, but may act as a sensor of peroxynitrite levels in vivo. This chain is Peroxynitrite isomerase, found in Clavibacter sepedonicus (Clavibacter michiganensis subsp. sepedonicus).